We begin with the raw amino-acid sequence, 313 residues long: Ribonuclease HIII (313 aa).

The interval 63-85 (ARWGTAEPQEKKKTAKKPADPRY) is disordered. Basic and acidic residues predominate over residues 70–82 (PQEKKKTAKKPAD). The region spanning 94 to 310 (MSVIGSDEVG…TQKAQRLADK (217 aa)) is the RNase H type-2 domain. A divalent metal cation contacts are provided by Asp100, Glu101, and Asp205.

This sequence belongs to the RNase HII family. RnhC subfamily. Interacts with the RNA polymerase core. Mn(2+) is required as a cofactor. The cofactor is Mg(2+).

The protein localises to the cytoplasm. The enzyme catalyses Endonucleolytic cleavage to 5'-phosphomonoester.. Its function is as follows. Endonuclease that specifically degrades the RNA of RNA-DNA hybrids. In Bacillus subtilis (strain 168), this protein is Ribonuclease HIII (rnhC).